The primary structure comprises 984 residues: Putative formate dehydrogenase SAR2393 (984 aa).

The 2Fe-2S ferredoxin-type domain occupies 3 to 79 (EHLVVTLDGK…PMTVNTVNND (77 aa)). [2Fe-2S] cluster is bound by residues C37, C48, C51, and C63. The region spanning 79–119 (DVKDAQKEALDRILEKHMLYCTVCDYNNGDCEIHNTMDAWG) is the 4Fe-4S His(Cys)3-ligated-type domain. [4Fe-4S] cluster contacts are provided by H95, C99, C102, C109, C147, C150, C153, C157, C190, C193, C196, C200, C264, C267, C271, and C299. 4Fe-4S ferredoxin-type domains are found at residues 138 to 165 (PFYRYDPNQCILCGRCVEACQDIELNET) and 181 to 211 (NDVPINESSCVSCGQCATVCPCNAMMEVNME). The tract at residues 252–984 (MRKERIKKTK…YVFPGNQVDK (733 aa)) is formate dehydrogenase. Residues 257–313 (IKKTKTVCTYCGVGCSFEVWTKDREILKVQPSHDSPANKIATCVKGKFSWGHINSDQ) form the 4Fe-4S Mo/W bis-MGD-type domain.

It in the C-terminal section; belongs to the prokaryotic molybdopterin-containing oxidoreductase family. Requires [2Fe-2S] cluster as cofactor. The cofactor is [4Fe-4S] cluster. Mo-bis(molybdopterin guanine dinucleotide) serves as cofactor.

It catalyses the reaction formate + NAD(+) = CO2 + NADH. This is Putative formate dehydrogenase SAR2393 from Staphylococcus aureus (strain MRSA252).